A 597-amino-acid chain; its full sequence is Cytosolic Fe-S cluster assembly factor nar1 (597 aa).

Position 20 (Cys-20) interacts with [4Fe-4S] cluster. A disordered region spans residues 25 to 46 (ESLPQKESQSENPYEVTKEDKV). 5 residues coordinate [4Fe-4S] cluster: Cys-61, Cys-64, Cys-67, Cys-208, and Cys-263. The interval 424–449 (RLPGAKPQAVSSSANRRQPMSRNAAP) is disordered. Positions 432–444 (AVSSSANRRQPMS) are enriched in polar residues. [4Fe-4S] cluster is bound by residues Cys-464 and Cys-468.

It belongs to the NARF family.

Its function is as follows. Component of the cytosolic Fe/S protein assembly machinery. Required for maturation of extramitochondrial Fe/S proteins. May play a role in the transfer of pre-assembled Fe/S clusters to target apoproteins. The chain is Cytosolic Fe-S cluster assembly factor nar1 (nar1) from Aspergillus fumigatus (strain ATCC MYA-4609 / CBS 101355 / FGSC A1100 / Af293) (Neosartorya fumigata).